Consider the following 220-residue polypeptide: Protein-L-isoaspartate O-methyltransferase (220 aa).

The active site involves Ser-64.

This sequence belongs to the methyltransferase superfamily. L-isoaspartyl/D-aspartyl protein methyltransferase family.

The protein resides in the cytoplasm. It catalyses the reaction [protein]-L-isoaspartate + S-adenosyl-L-methionine = [protein]-L-isoaspartate alpha-methyl ester + S-adenosyl-L-homocysteine. In terms of biological role, catalyzes the methyl esterification of L-isoaspartyl residues in peptides and proteins that result from spontaneous decomposition of normal L-aspartyl and L-asparaginyl residues. It plays a role in the repair and/or degradation of damaged proteins. The chain is Protein-L-isoaspartate O-methyltransferase from Methanoculleus marisnigri (strain ATCC 35101 / DSM 1498 / JR1).